A 250-amino-acid polypeptide reads, in one-letter code: Triosephosphate isomerase (250 aa).

9–11 (NWK) contacts substrate. The active-site Electrophile is His95. Residue Glu167 is the Proton acceptor of the active site. Substrate contacts are provided by residues Gly173, Ser212, and 233-234 (GG).

The protein belongs to the triosephosphate isomerase family. As to quaternary structure, homodimer.

It localises to the cytoplasm. It catalyses the reaction D-glyceraldehyde 3-phosphate = dihydroxyacetone phosphate. It functions in the pathway carbohydrate biosynthesis; gluconeogenesis. The protein operates within carbohydrate degradation; glycolysis; D-glyceraldehyde 3-phosphate from glycerone phosphate: step 1/1. Its function is as follows. Involved in the gluconeogenesis. Catalyzes stereospecifically the conversion of dihydroxyacetone phosphate (DHAP) to D-glyceraldehyde-3-phosphate (G3P). The chain is Triosephosphate isomerase from Nitrosococcus oceani (strain ATCC 19707 / BCRC 17464 / JCM 30415 / NCIMB 11848 / C-107).